A 590-amino-acid chain; its full sequence is Aspartate--tRNA(Asp/Asn) ligase (590 aa).

Glu169 contacts L-aspartate. Positions Gln193–Lys196 are aspartate. Arg215 contacts L-aspartate. Residues Arg215–Glu217 and Gln224 each bind ATP. His447 is a binding site for L-aspartate. Position 479 (Glu479) interacts with ATP. Arg486 is a binding site for L-aspartate. Position 531 to 534 (Gly531 to Arg534) interacts with ATP. Residues Gly556–Ser590 form a disordered region.

It belongs to the class-II aminoacyl-tRNA synthetase family. Type 1 subfamily. In terms of assembly, homodimer.

The protein localises to the cytoplasm. It catalyses the reaction tRNA(Asx) + L-aspartate + ATP = L-aspartyl-tRNA(Asx) + AMP + diphosphate. Aspartyl-tRNA synthetase with relaxed tRNA specificity since it is able to aspartylate not only its cognate tRNA(Asp) but also tRNA(Asn). Reaction proceeds in two steps: L-aspartate is first activated by ATP to form Asp-AMP and then transferred to the acceptor end of tRNA(Asp/Asn). The chain is Aspartate--tRNA(Asp/Asn) ligase from Nocardioides sp. (strain ATCC BAA-499 / JS614).